A 181-amino-acid chain; its full sequence is MKQLLDFLPLIIFFTVYKLVDIYTATGALIAATAVQIAILYFVYKKVEKMHLVTFAMVTVFGTLTLAFHDDAFIKWKVTIIYSLFAIALAVSQIMNKSIIKAMLGKELKADDNIWARVTWYWALFFIGCGVLNVYVAFSLPLETWVNFKVFGLTALTLLNTVISVFYIYKHAQPEQDDTAN.

5 helical membrane passes run 22–42 (IYTATGALIAATAVQIAILYF), 50–70 (MHLVTFAMVTVFGTLTLAFHD), 72–92 (AFIKWKVTIIYSLFAIALAVS), 118–138 (VTWYWALFFIGCGVLNVYVAF), and 148–168 (FKVFGLTALTLLNTVISVFYI).

This sequence belongs to the YciB family.

It localises to the cell inner membrane. Functionally, plays a role in cell envelope biogenesis, maintenance of cell envelope integrity and membrane homeostasis. In Shewanella denitrificans (strain OS217 / ATCC BAA-1090 / DSM 15013), this protein is Inner membrane-spanning protein YciB.